We begin with the raw amino-acid sequence, 162 residues long: UPF0114 protein PST_0950 (162 aa).

Transmembrane regions (helical) follow at residues L15–F35, L53–V73, and L136–M156.

The protein belongs to the UPF0114 family.

It is found in the cell membrane. This chain is UPF0114 protein PST_0950, found in Stutzerimonas stutzeri (strain A1501) (Pseudomonas stutzeri).